A 317-amino-acid chain; its full sequence is L-lactate dehydrogenase (317 aa).

NAD(+) is bound by residues V17, D38, K43, and 82–83 (GA). Substrate-binding positions include Q85, R91, and 123–126 (NPVD). NAD(+) is bound by residues 121-123 (VAN) and S146. Residue 151–154 (DSAR) coordinates substrate. Beta-D-fructose 1,6-bisphosphate-binding residues include R156 and H171. H178 serves as the catalytic Proton acceptor. The residue at position 224 (Y224) is a Phosphotyrosine. T233 contacts substrate.

This sequence belongs to the LDH/MDH superfamily. LDH family. As to quaternary structure, homotetramer.

It is found in the cytoplasm. The enzyme catalyses (S)-lactate + NAD(+) = pyruvate + NADH + H(+). Its pathway is fermentation; pyruvate fermentation to lactate; (S)-lactate from pyruvate: step 1/1. Allosterically activated by fructose 1,6-bisphosphate (FBP). Functionally, catalyzes the conversion of lactate to pyruvate. This chain is L-lactate dehydrogenase, found in Moorella thermoacetica (strain ATCC 39073 / JCM 9320).